The primary structure comprises 126 residues: 13 kDa ribonucleoprotein-associated protein (126 aa).

This sequence belongs to the eukaryotic ribosomal protein eL8 family. As to quaternary structure, component of the U3 snoRNP particle. Binds to the C'/D and B/C motifs in U3 snoRNA. Component of the 25S U4/U6.U5 tri-snRNP particle, a subcomplex of the spliceosome. Binds to the 5' stem-loop of U4 snRNA.

It is found in the nucleus. It localises to the nucleolus. In terms of biological role, common component of the spliceosome and rRNA processing machinery. In association with the spliceosomal U4/U6.U5 tri-snRNP particle, required for splicing of pre-mRNA. In association with box C/D snoRNPs, required for processing of pre-ribosomal RNA (rRNA) and site-specific 2'-O-methylation of substrate RNAs. Essential for the accumulation and stability of U4 snRNA, U6 snRNA, and box C/D snoRNAs. In Candida albicans (strain SC5314 / ATCC MYA-2876) (Yeast), this protein is 13 kDa ribonucleoprotein-associated protein (SNU13).